Here is a 23-residue protein sequence, read N- to C-terminus: Elongation factor Tu (23 aa).

It belongs to the GTP-binding elongation factor family. EF-Tu/EF-1A subfamily. In terms of assembly, monomer. The N-terminus is blocked. In terms of processing, the C-terminus may be subjected to proteolysis.

The protein localises to the cytoplasm. This protein promotes the GTP-dependent binding of aminoacyl-tRNA to the A-site of ribosomes during protein biosynthesis. The polypeptide is Elongation factor Tu (tuf) (Delftia acidovorans (Pseudomonas acidovorans)).